We begin with the raw amino-acid sequence, 424 residues long: MRRVLRLLLGCFLTELCARMCRAQERSGHGQLAQLGGVLLLTGGNRSGAASGEAGEGVGGSDAPPTRAPTPDSCRGYFDVMGQWDPPFNCSSGDFIFCCGTCGFRFCCTFKKRRLNQSTCTNYDTPLWLNTGKPPARKDDPLHDPTKDKTNLIVYIICGVVAVMVLVGIFTKLGLEKAHRPQREHMSRALADVMRPQGHCNTDHMERDLNIVVHVQHYENMDSRTPINNLHTTQMNNAVPTSPLLQQMGHPHSYPNLGQISNPYEQQPPGKELNKYASLKAVGNSDGDWAVATLKSPKADKVNDDFYAKRRHLAELAVKGNLPLHPVRVEDEPRAFSPEHGPAQQNGQKSRTNKMPPHPLAYNSTANFKTWDPSDQSLRRQAYGNKGKLGIAESGSCDPLGTRTQHFPPTQPYFITNSKTEVTV.

The N-terminal stretch at methionine 1–alanine 23 is a signal peptide. Topologically, residues glutamine 24 to lysine 149 are extracellular. Asparagine 45, asparagine 89, and asparagine 116 each carry an N-linked (GlcNAc...) asparagine glycan. A helical transmembrane segment spans residues threonine 150 to phenylalanine 170. Over threonine 171–valine 424 the chain is Cytoplasmic. Disordered stretches follow at residues proline 333–proline 373 and leucine 389–valine 424. Polar residues-rich tracts occupy residues tyrosine 362–proline 373 and threonine 402–valine 424.

It belongs to the shisa family. SHISA9 subfamily. As to quaternary structure, component of some AMPA receptors (ionotropic glutamate receptors) complex, at least composed of some AMPA receptor (GRIA1, GRIA2 and/or GRIA3), CACNG2 and SHISA9, as well as low level of DLG4. As to expression, brain-specific. Mainly expressed in neurons, including in hippocampus, cerebral cortex, striatum, thalamus, olfactory bulb and cerebellum. Expressed in most brain structures during embryonic and postnatal development.

The protein localises to the cell projection. Its subcellular location is the dendritic spine membrane. The protein resides in the synapse. Its function is as follows. Regulator of short-term neuronal synaptic plasticity in the dentate gyrus. Associates with AMPA receptors (ionotropic glutamate receptors) in synaptic spines and promotes AMPA receptor desensitization at excitatory synapses. This Mus musculus (Mouse) protein is Protein shisa-9 (Shisa9).